The chain runs to 382 residues: Methylthioribose-1-phosphate isomerase (382 aa).

Catalysis depends on Asp-257, which acts as the Proton donor.

It belongs to the eIF-2B alpha/beta/delta subunits family. MtnA subfamily.

It localises to the cytoplasm. Its subcellular location is the nucleus. It catalyses the reaction 5-(methylsulfanyl)-alpha-D-ribose 1-phosphate = 5-(methylsulfanyl)-D-ribulose 1-phosphate. The protein operates within amino-acid biosynthesis; L-methionine biosynthesis via salvage pathway; L-methionine from S-methyl-5-thio-alpha-D-ribose 1-phosphate: step 1/6. In terms of biological role, catalyzes the interconversion of methylthioribose-1-phosphate (MTR-1-P) into methylthioribulose-1-phosphate (MTRu-1-P). This chain is Methylthioribose-1-phosphate isomerase, found in Paracoccidioides brasiliensis (strain Pb18).